The sequence spans 55 residues: ATP synthase F(0) complex subunit 8 (55 aa).

The chain crosses the membrane as a helical span at residues 7-24 (APWFSIMIMTWLTLALLI). The disordered stretch occupies residues 34–55 (TNPPSSKPSLTTKPTPWAWPWT).

Belongs to the ATPase protein 8 family. In terms of assembly, component of the ATP synthase complex composed at least of ATP5F1A/subunit alpha, ATP5F1B/subunit beta, ATP5MC1/subunit c (homooctomer), MT-ATP6/subunit a, MT-ATP8/subunit 8, ATP5ME/subunit e, ATP5MF/subunit f, ATP5MG/subunit g, ATP5MK/subunit k, ATP5MJ/subunit j, ATP5F1C/subunit gamma, ATP5F1D/subunit delta, ATP5F1E/subunit epsilon, ATP5PF/subunit F6, ATP5PB/subunit b, ATP5PD/subunit d, ATP5PO/subunit OSCP. ATP synthase complex consists of a soluble F(1) head domain (subunits alpha(3) and beta(3)) - the catalytic core - and a membrane F(0) domain - the membrane proton channel (subunits c, a, 8, e, f, g, k and j). These two domains are linked by a central stalk (subunits gamma, delta, and epsilon) rotating inside the F1 region and a stationary peripheral stalk (subunits F6, b, d, and OSCP).

The protein resides in the mitochondrion membrane. Its function is as follows. Subunit 8, of the mitochondrial membrane ATP synthase complex (F(1)F(0) ATP synthase or Complex V) that produces ATP from ADP in the presence of a proton gradient across the membrane which is generated by electron transport complexes of the respiratory chain. ATP synthase complex consist of a soluble F(1) head domain - the catalytic core - and a membrane F(1) domain - the membrane proton channel. These two domains are linked by a central stalk rotating inside the F(1) region and a stationary peripheral stalk. During catalysis, ATP synthesis in the catalytic domain of F(1) is coupled via a rotary mechanism of the central stalk subunits to proton translocation. In vivo, can only synthesize ATP although its ATP hydrolase activity can be activated artificially in vitro. Part of the complex F(0) domain. The polypeptide is ATP synthase F(0) complex subunit 8 (Aythya americana (Redhead)).